The sequence spans 357 residues: Probable butyrate kinase 1 (357 aa).

This sequence belongs to the acetokinase family.

Its subcellular location is the cytoplasm. It catalyses the reaction butanoate + ATP = butanoyl phosphate + ADP. This chain is Probable butyrate kinase 1, found in Caldanaerobacter subterraneus subsp. tengcongensis (strain DSM 15242 / JCM 11007 / NBRC 100824 / MB4) (Thermoanaerobacter tengcongensis).